A 744-amino-acid polypeptide reads, in one-letter code: MEAMLVDCVNNSLRHFVYKNAIFMCERLCAEFPSEVNLQLLATSYLQNNQAYSAYHLLKGTQMAQSRYLFALSCFQMDLLNEAESALCPVNEPGAEIPNGAAGHYLLGLIYKYTDRRKNAAQQFKQSLTIDPLLWAAYEELCILGAAEEATAVFGETAALSIQKQYMQQLSTSLGLNTYNEERNSTSTKNTSSEDYSPRQSKHTQSHGLKDISGNFHSHGVNGGVSNMSFYNTPSPVAAQLSGIAPPPLFRNFQPAVANPNSLITDSSPKSTVNSTLQAPRRKFVDEGKLRKISGRLFSDSGPRRSSRLSADSGANINSSVATVSGNVNNASKYLGGSKLSSLALRSVTLRKGHSWANENMDEGVRGEPFDDSRPNTASTTGSMASNDQEDETMSIGGIAMSSQTITIGVSEILNLLRTLGEGCRLSYMYRCQEALDTYMKLPHKHYNTGWVLSQVGKAYFELIDYLEAEKAFRLARLASPYCLEGMDIYSTVLYHLKEDMKLSYLAQELISTDRLAPQSWCAMGNCYSLQKDHETALKNFLRAVQLNPRFAYAHTLCGHEYTTLEDFENGMKSYQNALRVDTRHYNAWYGLGMIYLRQEKLEFSEHHFRMAFLINPSSSVIMSYLGTSLHALKRSEEALEIMEQAIVADRKNPLPMYQKANILVCLERLDEALEVLEELKEYAPSESSVYALMGRIYKRRNMHDKAMLHFGLALDMKPPATDVAAIKAAMEKLHVPDEIDESP.

One copy of the TPR 1 repeat lies at 101–134; the sequence is AAGHYLLGLIYKYTDRRKNAAQQFKQSLTIDPLL. Polar residues predominate over residues 180-199; the sequence is NEERNSTSTKNTSSEDYSPR. 2 disordered regions span residues 180–218 and 359–390; these read NEER…NFHS and ENMD…NDQE. Residues 363-374 are compositionally biased toward basic and acidic residues; that stretch reads EGVRGEPFDDSR. A compositionally biased stretch (polar residues) spans 375–387; that stretch reads PNTASTTGSMASN. 7 TPR repeats span residues 450–483, 518–551, 553–585, 587–619, 621–653, 655–687, and 688–721; these read GWVL…SPYC, PQSW…NPRF, YAHT…DTRH, NAWY…NPSS, VIMS…DRKN, LPMY…APSE, and SSVY…KPPA.

The protein belongs to the APC3/CDC27 family. As to quaternary structure, the APC/C is composed of at least 10 subunits. Can homodimerize. Interacts with APC2, APC10, FZR2 and FZR3. Interacts with PANS1. Interacts with SAMBA. As to expression, specifically expressed in dividing and elongating cells.

It is found in the nucleus. The protein operates within protein modification; protein ubiquitination. Functionally, component of the anaphase promoting complex/cyclosome (APC/C), a cell cycle-regulated E3 ubiquitin-protein ligase complex that controls progression through mitosis and the G1 phase of the cell cycle. The APC/C complex controls several key steps in the cell cycle by mediating ubiquitination and subsequent degradation of target proteins such as cyclins. The APC/C complex is required for the female gametophyte development and is involved in several aspect of development by controlling cell division and cell elongation. Involved in the control of endoreduplication. Functionally redundant with CDC27A in the control of gametophyte development. In Arabidopsis thaliana (Mouse-ear cress), this protein is Cell division cycle protein 27 homolog B (CDC27B).